A 197-amino-acid chain; its full sequence is Endoribonuclease YbeY (197 aa).

3 residues coordinate Zn(2+): histidine 156, histidine 160, and histidine 166.

This sequence belongs to the endoribonuclease YbeY family. Zn(2+) serves as cofactor.

The protein localises to the cytoplasm. In terms of biological role, single strand-specific metallo-endoribonuclease involved in late-stage 70S ribosome quality control and in maturation of the 3' terminus of the 16S rRNA. The sequence is that of Endoribonuclease YbeY from Cupriavidus metallidurans (strain ATCC 43123 / DSM 2839 / NBRC 102507 / CH34) (Ralstonia metallidurans).